The primary structure comprises 264 residues: V-type proton ATPase subunit D (264 aa).

Over residues 214–230 (RDNAETDAQMKAKKAEQ) the composition is skewed to basic and acidic residues. The disordered stretch occupies residues 214–264 (RDNAETDAQMKAKKAEQQRLALADSENAEGEQTENTPADILAAEEDEDVIF). A compositionally biased stretch (acidic residues) spans 255–264 (AAEEDEDVIF).

The protein belongs to the V-ATPase D subunit family. As to quaternary structure, V-ATPase is a heteromultimeric enzyme composed of a peripheral catalytic V1 complex (components A to H) attached to an integral membrane V0 proton pore complex (components: a, c, c', c'', d, e, f and VOA1).

It is found in the vacuole membrane. In terms of biological role, subunit of the V1 complex of vacuolar(H+)-ATPase (V-ATPase), a multisubunit enzyme composed of a peripheral complex (V1) that hydrolyzes ATP and a membrane integral complex (V0) that translocates protons. V-ATPase is responsible for acidifying and maintaining the pH of intracellular compartments. This chain is V-type proton ATPase subunit D (vma-8), found in Neurospora crassa (strain ATCC 24698 / 74-OR23-1A / CBS 708.71 / DSM 1257 / FGSC 987).